The primary structure comprises 259 residues: Deoxyribose-phosphate aldolase (259 aa).

Catalysis depends on Asp102, which acts as the Proton donor/acceptor. The active-site Schiff-base intermediate with acetaldehyde is the Lys167. Lys201 functions as the Proton donor/acceptor in the catalytic mechanism.

The protein belongs to the DeoC/FbaB aldolase family. DeoC type 2 subfamily.

The protein localises to the cytoplasm. The catalysed reaction is 2-deoxy-D-ribose 5-phosphate = D-glyceraldehyde 3-phosphate + acetaldehyde. The protein operates within carbohydrate degradation; 2-deoxy-D-ribose 1-phosphate degradation; D-glyceraldehyde 3-phosphate and acetaldehyde from 2-deoxy-alpha-D-ribose 1-phosphate: step 2/2. Its function is as follows. Catalyzes a reversible aldol reaction between acetaldehyde and D-glyceraldehyde 3-phosphate to generate 2-deoxy-D-ribose 5-phosphate. The protein is Deoxyribose-phosphate aldolase of Proteus mirabilis (strain HI4320).